The chain runs to 533 residues: D-3-phosphoglycerate dehydrogenase (533 aa).

A2 is modified (N-acetylalanine). Residue S14 is modified to Phosphoserine. K21 bears the N6-acetyllysine; alternate mark. Residue K21 forms a Glycyl lysine isopeptide (Lys-Gly) (interchain with G-Cter in SUMO1); alternate linkage. A Glycyl lysine isopeptide (Lys-Gly) (interchain with G-Cter in SUMO2); alternate cross-link involves residue K21. K58 carries the post-translational modification N6-acetyllysine. NAD(+) is bound by residues T78, 155–156, D175, T207, 234–236, and D260; these read RI and CAR. A Phosphothreonine modification is found at T78. Residue R236 is part of the active site. E265 is a catalytic residue. Catalysis depends on H283, which acts as the Proton donor. 283-286 is an NAD(+) binding site; it reads HLGA.

This sequence belongs to the D-isomer specific 2-hydroxyacid dehydrogenase family. In terms of assembly, homotetramer.

The catalysed reaction is (2R)-3-phosphoglycerate + NAD(+) = 3-phosphooxypyruvate + NADH + H(+). It carries out the reaction (R)-2-hydroxyglutarate + NAD(+) = 2-oxoglutarate + NADH + H(+). It catalyses the reaction (S)-malate + NAD(+) = oxaloacetate + NADH + H(+). It functions in the pathway amino-acid biosynthesis; L-serine biosynthesis; L-serine from 3-phospho-D-glycerate: step 1/3. Functionally, catalyzes the reversible oxidation of 3-phospho-D-glycerate to 3-phosphonooxypyruvate, the first step of the phosphorylated L-serine biosynthesis pathway. Also catalyzes the reversible oxidation of 2-hydroxyglutarate to 2-oxoglutarate and the reversible oxidation of (S)-malate to oxaloacetate. In Pan troglodytes (Chimpanzee), this protein is D-3-phosphoglycerate dehydrogenase (PHGDH).